Consider the following 374-residue polypeptide: MLNRPSSPDGGEAHAWPPDPEIPVFANAEHAHRRPLRWMFALVAVALSCLLATGIWRSRAAPPHAATQTVAPAGQALPPGRMFTVHPREPEPAPLPDMPAAPNPILPQPRPAPPVPPPPIRAPYDYDEPAPRRDSAALKSGPAMMVATAARLGQTERAGMAEDGVSADAATLIGRSVSRATRSGGRDYRLLPGTFIDCILQTRIVTNVPGLTTCIVSRDVYSASGKRVLVPRGTTVVGEYRADLAQGSQRIYVAWSRLFMPSGLTIELASPAVDGTGAAGLPGVVDDKFAQRFGGALLLSVLGDATSYMLARATDARHGVNVNLTAAGTMNSLAASALNNTINIPPTLYKNHGDQIGILVARPLDFSILRGTNE.

Residues tryptophan 38–tryptophan 56 form a helical membrane-spanning segment. Residues proline 87 to proline 116 are disordered. Residues proline 92–proline 116 are compositionally biased toward pro residues.

Belongs to the TrbI/VirB10 family.

It is found in the cell membrane. In Bordetella parapertussis (strain 12822 / ATCC BAA-587 / NCTC 13253), this protein is Type IV secretion system protein PtlG homolog (ptlG).